Reading from the N-terminus, the 136-residue chain is Peptide methionine sulfoxide reductase MsrB (136 aa).

In terms of domain architecture, MsrB spans 13-135; sequence ENDWRSKLTP…NSASLDFKDK (123 aa). 4 residues coordinate Zn(2+): Cys-52, Cys-55, Cys-101, and Cys-104. Catalysis depends on Cys-124, which acts as the Nucleophile.

The protein belongs to the MsrB Met sulfoxide reductase family. Requires Zn(2+) as cofactor.

The enzyme catalyses L-methionyl-[protein] + [thioredoxin]-disulfide + H2O = L-methionyl-(R)-S-oxide-[protein] + [thioredoxin]-dithiol. The protein is Peptide methionine sulfoxide reductase MsrB of Synechococcus sp. (strain RCC307).